An 831-amino-acid chain; its full sequence is Periplasmic nitrate reductase (831 aa).

The tat-type signal signal peptide spans 1 to 31 (MKLSRRDFMKANAAVAAAAAAGLTIPTVAKA). In terms of domain architecture, 4Fe-4S Mo/W bis-MGD-type spans 40 to 96 (IKWDKAPCRFCGTGCGVLVGTQNGRIVASQGDPDSPVNRGLNCVKGYFLPKIMYGKD). [4Fe-4S] cluster-binding residues include Cys47, Cys50, Cys54, and Cys82. Mo-bis(molybdopterin guanine dinucleotide) contacts are provided by residues Lys84, Gln151, Asn176, Cys180, 213-220 (WGSNMAEM), 244-248 (STFEH), 263-265 (QTD), Met373, Gln377, Asn483, 509-510 (SD), Lys532, Asp559, and 719-728 (TGRVLEHWHT). Residue Phe795 participates in substrate binding. 2 residues coordinate Mo-bis(molybdopterin guanine dinucleotide): Asn803 and Lys820.

It belongs to the prokaryotic molybdopterin-containing oxidoreductase family. NasA/NapA/NarB subfamily. As to quaternary structure, component of the periplasmic nitrate reductase NapAB complex composed of NapA and NapB. [4Fe-4S] cluster serves as cofactor. Requires Mo-bis(molybdopterin guanine dinucleotide) as cofactor. In terms of processing, predicted to be exported by the Tat system. The position of the signal peptide cleavage has not been experimentally proven.

Its subcellular location is the periplasm. It carries out the reaction 2 Fe(II)-[cytochrome] + nitrate + 2 H(+) = 2 Fe(III)-[cytochrome] + nitrite + H2O. Catalytic subunit of the periplasmic nitrate reductase complex NapAB. Receives electrons from NapB and catalyzes the reduction of nitrate to nitrite. In Yersinia enterocolitica serotype O:8 / biotype 1B (strain NCTC 13174 / 8081), this protein is Periplasmic nitrate reductase.